Reading from the N-terminus, the 2419-residue chain is Telomere-associated protein RIF1 (2419 aa).

Disordered stretches follow at residues 1–24 (MTAP…VPPG) and 373–408 (SIPS…SPRG). Polar residues predominate over residues 373–385 (SIPSPQGNSSRGS). A phosphoserine mark is found at S385, S391, S779, S976, and S1005. Position 1044 is a phosphothreonine (T1044). A compositionally biased stretch (low complexity) spans 1184–1198 (SSSTETSVVSSSSVS). Disordered stretches follow at residues 1184–1594 (SSST…QAVP) and 1613–1637 (RVIL…EKSK). Polar residues-rich tracts occupy residues 1199 to 1217 (NATF…QTFI) and 1228 to 1255 (RPFS…TNTD). T1215 carries the phosphothreonine modification. Residues S1231 and S1233 each carry the phosphoserine modification. Basic and acidic residues predominate over residues 1263–1272 (REVTNSKSDS). Over residues 1289 to 1302 (AEQSVTKKSKPSLT) the composition is skewed to polar residues. Positions 1323–1345 (HVSENDDHPSEATLEHKDGDPKP) are enriched in basic and acidic residues. Phosphoserine occurs at positions 1407, 1439, 1457, and 1498. A compositionally biased stretch (basic and acidic residues) spans 1416–1455 (SQERESGQQKKERRKEEEKIISKSPLRIKDDKLPTQKLTD). Residues 1457–1467 (SPIQENLTEKG) show a composition bias toward polar residues. T1504 carries the phosphothreonine modification. The span at 1507 to 1516 (NLDKSSEKPL) shows a compositional bias: basic and acidic residues. Polar residues predominate over residues 1525-1537 (RRASQGLISAVEN). Phosphoserine occurs at positions 1528, 1538, 1540, 1542, and 1550. The segment covering 1551 to 1560 (RKKRSGKWKN) has biased composition (basic residues). A phosphoserine mark is found at S1562 and S1565. Residues 1572 to 1581 (EEKKAEEEVM) are compositionally biased toward basic and acidic residues. A phosphoserine mark is found at S1680 and S1683. T1780 is subject to Phosphothreonine. S1784 bears the Phosphoserine mark. The disordered stretch occupies residues 1812-1836 (ASEAVSEIQGPCSENHSPAEDPGLS). Position 1842 is a phosphoserine (S1842). The segment at 1882–2419 (DAFVAADSEK…RWRSPAHENS (538 aa)) is interaction with condensed chromosomes in telophase. 2 disordered regions span residues 1890–1914 (EKST…ECEA) and 1929–1983 (FNSG…AQMS). Phosphoserine occurs at positions 1931, 2094, 2109, 2121, 2125, 2144, 2153, 2208, 2287, 2341, 2413, and 2419. An interaction with ERCC6 region spans residues 2119–2394 (VWSPLASPST…TGSQLFEMHE (276 aa)). Positions 2182-2212 (SPIIKSVKTSPTSHSKHNTTSAKGFLSPGSQ) are disordered. The span at 2189-2212 (KTSPTSHSKHNTTSAKGFLSPGSQ) shows a compositional bias: polar residues.

It belongs to the RIF1 family. As to quaternary structure, interacts with TP53BP1 (when phosphorylated by ATM). May interact with TRF2. Interacts with SHLD2. Interacts with ERCC6 (via WHD region). Interacts with ASTE1. As to expression, expressed in Sertoli cells, prospermatagonia, early primary spermatocytes, and in oocytes at all stages of their growth. Expressed in embryonic stem (ES) and embryonic germ (EG) cells: expression is lost upon differentiation.

It is found in the nucleus. The protein localises to the chromosome. Its subcellular location is the telomere. The protein resides in the cytoplasm. It localises to the cytoskeleton. It is found in the spindle. Its function is as follows. Key regulator of TP53BP1 that plays a key role in the repair of double-strand DNA breaks (DSBs) in response to DNA damage: acts by promoting non-homologous end joining (NHEJ)-mediated repair of DSBs. In response to DNA damage, interacts with ATM-phosphorylated TP53BP1. Interaction with TP53BP1 leads to dissociate the interaction between NUDT16L1/TIRR and TP53BP1, thereby unmasking the tandem Tudor-like domain of TP53BP1 and allowing recruitment to DNA DSBs. Once recruited to DSBs, RIF1 and TP53BP1 act by promoting NHEJ-mediated repair of DSBs. In the same time, RIF1 and TP53BP1 specifically counteract the function of BRCA1 by blocking DSBs resection via homologous recombination (HR) during G1 phase. Also required for immunoglobulin class-switch recombination (CSR) during antibody genesis, a process that involves the generation of DNA DSBs. Promotes NHEJ of dysfunctional telomeres. In Mus musculus (Mouse), this protein is Telomere-associated protein RIF1.